Consider the following 549-residue polypeptide: Biotin-dependent acetyl-/propionyl-coenzyme A carboxylase beta5 subunit (549 aa).

The 257-residue stretch at 25 to 281 (TAGKLAELHK…NNFTDAPRYS (257 aa)) folds into the CoA carboxyltransferase N-terminal domain. The region spanning 295–542 (AKDLELDTLI…ERKIAHLPPK (248 aa)) is the CoA carboxyltransferase C-terminal domain.

Belongs to the AccD/PCCB family. As to quaternary structure, the biotin-dependent acyl-CoA carboxylase complex is composed of AccA3, which contains the biotin carboxylase (BC) and biotin carboxyl carrier protein (BCCP) domains, and AccD5, which contains the carboxyl transferase (CT) domain.

It catalyses the reaction N(6)-carboxybiotinyl-L-lysyl-[protein] + acetyl-CoA = N(6)-biotinyl-L-lysyl-[protein] + malonyl-CoA. The enzyme catalyses N(6)-carboxybiotinyl-L-lysyl-[protein] + propanoyl-CoA = methylmalonyl-CoA + N(6)-biotinyl-L-lysyl-[protein]. The protein operates within lipid metabolism; mycolic acid biosynthesis. Its function is as follows. Component of a biotin-dependent acyl-CoA carboxylase complex. This subunit transfers the CO2 from carboxybiotin to the CoA ester substrate. When associated with the alpha3 subunit AccA3, is involved in the carboxylation of acetyl-CoA and propionyl-CoA. This is Biotin-dependent acetyl-/propionyl-coenzyme A carboxylase beta5 subunit (accD5) from Mycobacterium leprae (strain TN).